The primary structure comprises 166 residues: Signal peptidase complex catalytic subunit SEC11 (166 aa).

The Cytoplasmic segment spans residues 1–9; the sequence is MNIRQQITQ. Residues 10-30 traverse the membrane as a helical; Signal-anchor for type II membrane protein segment; sequence FLSLAYVFSSAFMLWKTLSVI. Residues 31–166 lie on the Lumenal side of the membrane; that stretch reads ANSHSPIVVV…LGLSSLFSNE (136 aa). Residues serine 44, histidine 83, and aspartate 108 each act as charge relay system in the active site. The interval 152-163 is C-terminal short (CTS) helix; the sequence is GMLGLLGLSSLF.

The protein belongs to the peptidase S26B family. In terms of assembly, component of the signal peptidase complex (SPC) composed of a catalytic subunit SEC11 and three accessory subunits SPC1, SPC2 and SPC3. The complex induces a local thinning of the ER membrane which is used to measure the length of the signal peptide (SP) h-region of protein substrates. This ensures the selectivity of the complex towards h-regions shorter than 18-20 amino acids. SPC associates with the translocon complex.

Its subcellular location is the endoplasmic reticulum membrane. The catalysed reaction is Cleavage of hydrophobic, N-terminal signal or leader sequences from secreted and periplasmic proteins.. Catalytic component of the signal peptidase complex (SPC) which catalyzes the cleavage of N-terminal signal sequences from nascent proteins as they are translocated into the lumen of the endoplasmic reticulum. Specifically cleaves N-terminal signal peptides that contain a hydrophobic alpha-helix (h-region) shorter than 18-20 amino acids. The protein is Signal peptidase complex catalytic subunit SEC11 (SEC11) of Candida albicans (strain SC5314 / ATCC MYA-2876) (Yeast).